The sequence spans 150 residues: UPF0178 protein AZOSEA36080 (150 aa).

It belongs to the UPF0178 family.

In Aromatoleum aromaticum (strain DSM 19018 / LMG 30748 / EbN1) (Azoarcus sp. (strain EbN1)), this protein is UPF0178 protein AZOSEA36080.